The chain runs to 180 residues: UPF0397 protein SSA_0592 (180 aa).

5 helical membrane passes run V9–T29, L45–I65, G72–F92, L113–V133, and I146–A166.

The protein belongs to the UPF0397 family.

The protein resides in the cell membrane. This Streptococcus sanguinis (strain SK36) protein is UPF0397 protein SSA_0592.